The following is a 544-amino-acid chain: Transcription factor bHLH119 (544 aa).

Disordered stretches follow at residues asparagine 12–arginine 59 and valine 185–valine 208. Positions valine 15–proline 29 are enriched in polar residues. Residues leucine 50–arginine 59 are compositionally biased toward pro residues. A Phosphothreonine modification is found at threonine 269. Serine 274 is subject to Phosphoserine. Disordered stretches follow at residues glutamine 342–leucine 364 and glutamine 522–lysine 544. Residues arginine 357 to leucine 406 form the bHLH domain. Positions glutamine 522 to proline 535 are enriched in low complexity. Phosphoserine is present on residues serine 541 and serine 543.

In terms of assembly, homodimer.

The protein resides in the nucleus. This is Transcription factor bHLH119 (BHLH119) from Arabidopsis thaliana (Mouse-ear cress).